A 185-amino-acid chain; its full sequence is MINEIKKDAKERMTKSVESLAHNFGRIRTGQAHPSILEGVMVPYYGADTPIKQVANITVKDARTLQVVAFERNMLGAVDKAIGSAGLNLNPTNLGELLLISMPALTEETRRGFTKQARDVAEDARVAVRNIRRDANSSLKDLVKEKEISEDEERRAAGEIDDLTKKFVAEIDAKLAEKEKDLMAV.

This sequence belongs to the RRF family.

It is found in the cytoplasm. Responsible for the release of ribosomes from messenger RNA at the termination of protein biosynthesis. May increase the efficiency of translation by recycling ribosomes from one round of translation to another. The polypeptide is Ribosome-recycling factor (Pseudomonas fluorescens (strain Pf0-1)).